The following is a 749-amino-acid chain: Cytosolic phospholipase A2 (749 aa).

The C2 domain occupies 1 to 124 (MASIDPYQHI…GEKKQVPFTF (124 aa)). Residues 1–178 (MASIDPYQHI…LRKLLGPEKT (178 aa)) are phospholipid binding. 7 residues coordinate Ca(2+): D40, T41, D43, N65, D93, A94, and N95. The PLA2c domain maps to 138 to 740 (VCSSTDLRFS…NDVEARKLLH (603 aa)). S229 functions as the Nucleophile in the catalytic mechanism. The disordered stretch occupies residues 417 to 458 (MEEEIENLKPKHILGNDSSDSDDEMQEPKGTENSKAEEEYQR). The segment covering 442–457 (QEPKGTENSKAEEEYQ) has biased composition (basic and acidic residues). D549 acts as the Proton acceptor in catalysis.

The protein resides in the cytoplasm. It is found in the cytoplasmic vesicle. It catalyses the reaction a 1,2-diacyl-sn-glycero-3-phosphocholine + H2O = a 1-acyl-sn-glycero-3-phosphocholine + a fatty acid + H(+). The catalysed reaction is a 1-acyl-sn-glycero-3-phosphocholine + H2O = sn-glycerol 3-phosphocholine + a fatty acid + H(+). Its activity is regulated as follows. Stimulated by agonists such as ATP, EGF, thrombin and bradykinin as well as by cytosolic Ca(2+). Selectively hydrolyzes arachidonyl phospholipids in the sn-2 position releasing arachidonic acid. Together with its lysophospholipid activity, it is implicated in the initiation of the inflammatory response. The sequence is that of Cytosolic phospholipase A2 (pla2g4a) from Xenopus tropicalis (Western clawed frog).